A 274-amino-acid chain; its full sequence is tRNA-cytidine(32) 2-sulfurtransferase (274 aa).

The PP-loop motif signature appears at 40 to 45; it reads SGGKDS. Positions 115, 118, and 206 each coordinate [4Fe-4S] cluster.

The protein belongs to the TtcA family. In terms of assembly, homodimer. It depends on Mg(2+) as a cofactor. [4Fe-4S] cluster is required as a cofactor.

It localises to the cytoplasm. The catalysed reaction is cytidine(32) in tRNA + S-sulfanyl-L-cysteinyl-[cysteine desulfurase] + AH2 + ATP = 2-thiocytidine(32) in tRNA + L-cysteinyl-[cysteine desulfurase] + A + AMP + diphosphate + H(+). It functions in the pathway tRNA modification. Functionally, catalyzes the ATP-dependent 2-thiolation of cytidine in position 32 of tRNA, to form 2-thiocytidine (s(2)C32). The sulfur atoms are provided by the cysteine/cysteine desulfurase (IscS) system. In Stutzerimonas stutzeri (strain A1501) (Pseudomonas stutzeri), this protein is tRNA-cytidine(32) 2-sulfurtransferase.